The sequence spans 116 residues: MSWRGRSTYRPRPRRYVEPPEMIGPMRPEQFSDEVEPATPEEGEPATQRQDPAAAQEGQDEGASAGQGPKPEAHSQEQGHPQTGCECEDGPDGQEMDPPNPEEVKTPEEGEKQSQC.

Residues 1–116 are disordered; the sequence is MSWRGRSTYR…PEEGEKQSQC (116 aa). 2 stretches are compositionally biased toward acidic residues: residues 31 to 44 and 86 to 95; these read FSDE…EEGE and ECEDGPDGQE. Residues 102–116 are compositionally biased toward basic and acidic residues; sequence EEVKTPEEGEKQSQC.

The protein belongs to the GAGE family.

The sequence is that of G antigen 2A (GAGE2A) from Homo sapiens (Human).